Reading from the N-terminus, the 417-residue chain is Serine hydroxymethyltransferase (417 aa).

(6S)-5,6,7,8-tetrahydrofolate contacts are provided by residues Leu-121 and 125-127 (GHL). At Lys-229 the chain carries N6-(pyridoxal phosphate)lysine. 355 to 357 (SPF) contributes to the (6S)-5,6,7,8-tetrahydrofolate binding site.

This sequence belongs to the SHMT family. Homodimer. It depends on pyridoxal 5'-phosphate as a cofactor.

The protein localises to the cytoplasm. It catalyses the reaction (6R)-5,10-methylene-5,6,7,8-tetrahydrofolate + glycine + H2O = (6S)-5,6,7,8-tetrahydrofolate + L-serine. Its pathway is one-carbon metabolism; tetrahydrofolate interconversion. It functions in the pathway amino-acid biosynthesis; glycine biosynthesis; glycine from L-serine: step 1/1. Functionally, catalyzes the reversible interconversion of serine and glycine with tetrahydrofolate (THF) serving as the one-carbon carrier. This reaction serves as the major source of one-carbon groups required for the biosynthesis of purines, thymidylate, methionine, and other important biomolecules. Also exhibits THF-independent aldolase activity toward beta-hydroxyamino acids, producing glycine and aldehydes, via a retro-aldol mechanism. The chain is Serine hydroxymethyltransferase from Shewanella baltica (strain OS195).